Consider the following 238-residue polypeptide: tRNA (guanine-N(7)-)-methyltransferase (238 aa).

Residues E68, E93, D120, and D143 each contribute to the S-adenosyl-L-methionine site. The active site involves D143. Residues K147, D179, and 216–219 (TKFE) contribute to the substrate site.

This sequence belongs to the class I-like SAM-binding methyltransferase superfamily. TrmB family.

It catalyses the reaction guanosine(46) in tRNA + S-adenosyl-L-methionine = N(7)-methylguanosine(46) in tRNA + S-adenosyl-L-homocysteine. The protein operates within tRNA modification; N(7)-methylguanine-tRNA biosynthesis. Functionally, catalyzes the formation of N(7)-methylguanine at position 46 (m7G46) in tRNA. This is tRNA (guanine-N(7)-)-methyltransferase from Shewanella oneidensis (strain ATCC 700550 / JCM 31522 / CIP 106686 / LMG 19005 / NCIMB 14063 / MR-1).